Consider the following 122-residue polypeptide: Small ribosomal subunit protein uS13 (122 aa).

Residues 93–122 (RRGLPVRGQKTKTNARTRKGPKKTMANKKK) are disordered.

Belongs to the universal ribosomal protein uS13 family. In terms of assembly, part of the 30S ribosomal subunit. Forms a loose heterodimer with protein S19. Forms two bridges to the 50S subunit in the 70S ribosome.

Functionally, located at the top of the head of the 30S subunit, it contacts several helices of the 16S rRNA. In the 70S ribosome it contacts the 23S rRNA (bridge B1a) and protein L5 of the 50S subunit (bridge B1b), connecting the 2 subunits; these bridges are implicated in subunit movement. Contacts the tRNAs in the A and P-sites. The protein is Small ribosomal subunit protein uS13 of Clostridium botulinum (strain Alaska E43 / Type E3).